The primary structure comprises 226 residues: Urease accessory protein UreF (226 aa).

The protein belongs to the UreF family. UreD, UreF and UreG form a complex that acts as a GTP-hydrolysis-dependent molecular chaperone, activating the urease apoprotein by helping to assemble the nickel containing metallocenter of UreC. The UreE protein probably delivers the nickel.

The protein resides in the cytoplasm. Its function is as follows. Required for maturation of urease via the functional incorporation of the urease nickel metallocenter. In Burkholderia cenocepacia (strain ATCC BAA-245 / DSM 16553 / LMG 16656 / NCTC 13227 / J2315 / CF5610) (Burkholderia cepacia (strain J2315)), this protein is Urease accessory protein UreF.